The chain runs to 391 residues: Formate-dependent phosphoribosylglycinamide formyltransferase (391 aa).

N(1)-(5-phospho-beta-D-ribosyl)glycinamide is bound by residues 18 to 19 (EL) and E78. Residues R110, K151, 156–161 (SSGKGQ), 191–194 (EEFI), and E199 contribute to the ATP site. Residues 115–305 (DLASKDLKIK…EFELHLRAFL (191 aa)) enclose the ATP-grasp domain. Mg(2+) contacts are provided by E264 and E276. N(1)-(5-phospho-beta-D-ribosyl)glycinamide is bound by residues D283, K353, and 360–361 (RR).

Belongs to the PurK/PurT family. As to quaternary structure, homodimer.

It catalyses the reaction N(1)-(5-phospho-beta-D-ribosyl)glycinamide + formate + ATP = N(2)-formyl-N(1)-(5-phospho-beta-D-ribosyl)glycinamide + ADP + phosphate + H(+). It participates in purine metabolism; IMP biosynthesis via de novo pathway; N(2)-formyl-N(1)-(5-phospho-D-ribosyl)glycinamide from N(1)-(5-phospho-D-ribosyl)glycinamide (formate route): step 1/1. Its function is as follows. Involved in the de novo purine biosynthesis. Catalyzes the transfer of formate to 5-phospho-ribosyl-glycinamide (GAR), producing 5-phospho-ribosyl-N-formylglycinamide (FGAR). Formate is provided by PurU via hydrolysis of 10-formyl-tetrahydrofolate. This Prochlorococcus marinus (strain AS9601) protein is Formate-dependent phosphoribosylglycinamide formyltransferase.